We begin with the raw amino-acid sequence, 371 residues long: tRNA-specific 2-thiouridylase MnmA (371 aa).

ATP-binding positions include 22–29 (GLSGGVDS) and M48. An interaction with target base in tRNA region spans residues 108 to 110 (NPD). Catalysis depends on C113, which acts as the Nucleophile. An intrachain disulfide couples C113 to C209. G137 lines the ATP pocket. Residues 159–161 (KDQ) are interaction with tRNA. C209 serves as the catalytic Cysteine persulfide intermediate.

The protein belongs to the MnmA/TRMU family.

Its subcellular location is the cytoplasm. It carries out the reaction S-sulfanyl-L-cysteinyl-[protein] + uridine(34) in tRNA + AH2 + ATP = 2-thiouridine(34) in tRNA + L-cysteinyl-[protein] + A + AMP + diphosphate + H(+). Its function is as follows. Catalyzes the 2-thiolation of uridine at the wobble position (U34) of tRNA, leading to the formation of s(2)U34. This is tRNA-specific 2-thiouridylase MnmA from Coxiella burnetii (strain CbuK_Q154) (Coxiella burnetii (strain Q154)).